The sequence spans 710 residues: Polyribonucleotide nucleotidyltransferase (710 aa).

D487 and D493 together coordinate Mg(2+). Residues 554-613 (PRIHTMKISAEKIKDVIGKGGAVIRALTEETGTTIEIEDDGTIKIAATEGAAAKEAIRRI) form the KH domain. The S1 motif domain maps to 623–691 (GRIYTGKVAR…RQGRVRLSMK (69 aa)). The interval 691-710 (KEAVEKPAEEANDASEAKGE) is disordered.

The protein belongs to the polyribonucleotide nucleotidyltransferase family. In terms of assembly, component of the RNA degradosome, which is a multiprotein complex involved in RNA processing and mRNA degradation. It depends on Mg(2+) as a cofactor.

The protein resides in the cytoplasm. It carries out the reaction RNA(n+1) + phosphate = RNA(n) + a ribonucleoside 5'-diphosphate. Functionally, involved in mRNA degradation. Catalyzes the phosphorolysis of single-stranded polyribonucleotides processively in the 3'- to 5'-direction. In Vibrio campbellii (strain ATCC BAA-1116), this protein is Polyribonucleotide nucleotidyltransferase.